We begin with the raw amino-acid sequence, 143 residues long: uncharacterized protein (143 aa).

This sequence to E.coli YifN.

This is an uncharacterized protein from Haemophilus influenzae (strain ATCC 51907 / DSM 11121 / KW20 / Rd).